The chain runs to 339 residues: MARGGGKSGSLKDKLDGNELDLSLCGLSEVPVRELAALPKATVLDLSCNSLVSLPSDFCSLTHLVKLDLSKNRLQQLPVDFGRLVSLQHLDLLNNRLVTLPVSFAQLKLSLHHSPVEILSRLLGTPSSLLVFHSFHSWENQNLKWLDLKDNPLDPVLAKVAGDCLDEKQCKQAAVRVLQHMKVIQSEQDRERQRKLQAEREMEKKREAEQRAREAQERELRKREKAEEKERRRREYDAQRAAKQEMEKKTKKETVQTRKLASSSRPPQPARHKHSWSRSVLRALLLVLLCILCTLAVCKLTELQHQPLCVSVNTLYEDVVAAVQNHKTLQNMLQQNSQQ.

The Cytoplasmic portion of the chain corresponds to Met1–Arg282. 4 LRR repeats span residues Ser10 to Pro31, Lys40 to Leu61, His63 to Leu84, and Ser86 to Leu107. The stretch at Met181–Thr254 forms a coiled coil. The segment at Ser186 to Ser275 is disordered. The span at Glu187–Gln256 shows a compositional bias: basic and acidic residues. Residues Ala283 to Leu300 form a helical membrane-spanning segment. Residues Thr301–Gln339 lie on the Lumenal side of the membrane.

Interacts with SGO1.

The protein localises to the microsome membrane. It is found in the endoplasmic reticulum membrane. Its subcellular location is the nucleus envelope. Its function is as follows. Required for nuclear import of FGF1. The sequence is that of Leucine-rich repeat-containing protein 59 (LRRC59) from Gallus gallus (Chicken).